Reading from the N-terminus, the 183-residue chain is Glutamyl-tRNA(Gln) amidotransferase subunit F, mitochondrial (183 aa).

A mitochondrion-targeting transit peptide spans M1–Y23.

The protein belongs to the GatF family. Subunit of the heterotrimeric GatFAB amidotransferase (AdT) complex, composed of A, B and F subunits.

The protein localises to the mitochondrion inner membrane. The enzyme catalyses L-glutamyl-tRNA(Gln) + L-glutamine + ATP + H2O = L-glutaminyl-tRNA(Gln) + L-glutamate + ADP + phosphate + H(+). Allows the formation of correctly charged Gln-tRNA(Gln) through the transamidation of misacylated Glu-tRNA(Gln) in the mitochondria. The reaction takes place in the presence of glutamine and ATP through an activated gamma-phospho-Glu-tRNA(Gln). Required for proper protein synthesis within the mitochondrion. The chain is Glutamyl-tRNA(Gln) amidotransferase subunit F, mitochondrial from Debaryomyces hansenii (strain ATCC 36239 / CBS 767 / BCRC 21394 / JCM 1990 / NBRC 0083 / IGC 2968) (Yeast).